Here is a 31-residue protein sequence, read N- to C-terminus: Spectrin beta chain, non-erythrocytic 1 (31 aa).

3 Spectrin repeats span residues 1-10 (VLLLSQDYGK), 11-19 (YKEVAELTR), and 20-31 (TQILAASYELHK). At tyrosine 27 the chain carries Phosphotyrosine.

Belongs to the spectrin family. As to quaternary structure, interacts with ANK2. Interacts with CPNE4 (via VWFA domain). Like erythrocyte spectrin, the spectrin-like proteins are capable to form dimers which can further associate to tetramers. Associates with the gamma-tubulin complex in brain, but not in kidney, liver, sperm, or uterus. Interacts with CAMSAP1. Can form heterodimers with SPTAN1.

Its subcellular location is the cytoplasm. The protein localises to the cytoskeleton. It localises to the myofibril. It is found in the sarcomere. The protein resides in the m line. Its subcellular location is the cytosol. The protein localises to the cell membrane. In terms of biological role, fodrin, which seems to be involved in secretion, interacts with calmodulin in a calcium-dependent manner and is thus candidate for the calcium-dependent movement of the cytoskeleton at the membrane. Plays a critical role in central nervous system development and function. This Capra hircus (Goat) protein is Spectrin beta chain, non-erythrocytic 1 (SPTBN1).